An 810-amino-acid chain; its full sequence is Phospholipase D alpha 2 (810 aa).

The region spanning 1–126 (MEECLLHGRL…LHGEEVDRWV (126 aa)) is the C2 domain. Aspartate 187 serves as a coordination point for Ca(2+). The PLD phosphodiesterase 1 domain occupies 327 to 365 (TMFTHHQKIVVVDSEMPSGGSRSRRIVSFVGGLDLCDGR). Residues histidine 332, lysine 334, and aspartate 339 contribute to the active site. Histidine 332 lines the a 1,2-diacyl-sn-glycero-3-phosphate pocket. Ca(2+) is bound by residues histidine 371 and histidine 405. Positions 521 and 661 each coordinate a 1,2-diacyl-sn-glycero-3-phosphate. The PLD phosphodiesterase 2 domain occupies 656-683 (FMIYVHTKMMIVDDEYIIIGSANINQRS). Catalysis depends on residues histidine 661, lysine 663, and aspartate 668. Glutamate 722 contributes to the Ca(2+) binding site.

Belongs to the phospholipase D family. C2-PLD subfamily. Ca(2+) serves as cofactor. Highly expressed in roots, stems and flowers, moderately in leaves, seedlings and siliques. Not detected in dry seeds.

The protein localises to the cytoplasm. Its subcellular location is the membrane. It is found in the vacuole. The protein resides in the cytoplasmic vesicle. It localises to the clathrin-coated vesicle. The enzyme catalyses a 1,2-diacyl-sn-glycero-3-phosphocholine + H2O = a 1,2-diacyl-sn-glycero-3-phosphate + choline + H(+). Hydrolyzes glycerol-phospholipids at the terminal phosphodiesteric bond to generate phosphatidic acids (PA). Plays an important role in various cellular processes, including phytohormone action and response to stress, characterized by acidification of the cell. This is Phospholipase D alpha 2 from Arabidopsis thaliana (Mouse-ear cress).